The primary structure comprises 316 residues: Protoheme IX farnesyltransferase (316 aa).

9 helical membrane passes run 28 to 48, 50 to 70, 99 to 119, 122 to 142, 150 to 170, 178 to 198, 223 to 243, 244 to 264, and 293 to 313; these read IIPL…KGQV, PLLL…AQTL, HALI…VFFV, LSGF…THLL, IVIG…AVTG, ILFA…ALMI, IWLY…PLAA, CGVV…KKAW, and AMVI…ASLF.

Belongs to the UbiA prenyltransferase family. Protoheme IX farnesyltransferase subfamily.

The protein localises to the cell inner membrane. It carries out the reaction heme b + (2E,6E)-farnesyl diphosphate + H2O = Fe(II)-heme o + diphosphate. Its pathway is porphyrin-containing compound metabolism; heme O biosynthesis; heme O from protoheme: step 1/1. In terms of biological role, converts heme B (protoheme IX) to heme O by substitution of the vinyl group on carbon 2 of heme B porphyrin ring with a hydroxyethyl farnesyl side group. This chain is Protoheme IX farnesyltransferase, found in Microcystis aeruginosa (strain NIES-843 / IAM M-2473).